Here is a 1457-residue protein sequence, read N- to C-terminus: ABC transporter G family member 36 (1457 aa).

The disordered stretch occupies residues 14-43 (RLGGSMRGDSGSMWRRGDDVFSRSSREEDD). The span at 28–39 (RRGDDVFSRSSR) shows a compositional bias: basic and acidic residues. The region spanning 164–437 (GNALGILPNR…FESTGFKCPD (274 aa)) is the ABC transporter 1 domain. 197–204 (GPPGSGKT) is an ATP binding site. Positions 515-728 (ELLKANIDRE…AQNAISVNEL (214 aa)) constitute an ABC transmembrane type-2 1 domain. 7 consecutive transmembrane segments (helical) span residues 533–553 (FVYM…MTLF), 565–585 (SGGI…FNGF), 621–641 (IPIT…VIGF), 653–673 (LLML…GGAA), 677–697 (IVAN…GGFI), 706–726 (WWIW…ISVN), and 765–785 (IGFG…TLAL). Positions 821 to 841 (SSGSTRRPMGNGTENDSTIVD) are disordered. The ABC transporter 2 domain maps to 860-1112 (LSFDNVRYSV…ELIKYFESIP (253 aa)). 905 to 912 (GVSGAGKT) provides a ligand contact to ATP. The region spanning 1185-1399 (TQCMACLWKQ…TLYGLVVSQF (215 aa)) is the ABC transmembrane type-2 2 domain. Transmembrane regions (helical) follow at residues 1209–1229 (FFFT…LGGK), 1244–1264 (YAAV…VVAV), 1292–1312 (IPYT…MIGF), 1319–1339 (FFWY…YGMM), 1349–1369 (IASI…GFVI), 1380–1400 (WYCW…SQFG), and 1429–1449 (WVAT…GFAI).

It belongs to the ABC transporter superfamily. ABCG family. PDR (TC 3.A.1.205) subfamily.

The protein localises to the membrane. In terms of biological role, may be a general defense protein. The chain is ABC transporter G family member 36 from Oryza sativa subsp. indica (Rice).